A 464-amino-acid chain; its full sequence is ATP-dependent protease ATPase subunit HslU (464 aa).

ATP is bound by residues I22, 64-69 (GVGKTE), D275, E340, and R412.

It belongs to the ClpX chaperone family. HslU subfamily. A double ring-shaped homohexamer of HslV is capped on each side by a ring-shaped HslU homohexamer. The assembly of the HslU/HslV complex is dependent on binding of ATP.

The protein resides in the cytoplasm. Functionally, ATPase subunit of a proteasome-like degradation complex; this subunit has chaperone activity. The binding of ATP and its subsequent hydrolysis by HslU are essential for unfolding of protein substrates subsequently hydrolyzed by HslV. HslU recognizes the N-terminal part of its protein substrates and unfolds these before they are guided to HslV for hydrolysis. The polypeptide is ATP-dependent protease ATPase subunit HslU (Cytophaga hutchinsonii (strain ATCC 33406 / DSM 1761 / CIP 103989 / NBRC 15051 / NCIMB 9469 / D465)).